The chain runs to 64 residues: Large ribosomal subunit protein uL29 (64 aa).

This sequence belongs to the universal ribosomal protein uL29 family.

In Levilactobacillus brevis (strain ATCC 367 / BCRC 12310 / CIP 105137 / JCM 1170 / LMG 11437 / NCIMB 947 / NCTC 947) (Lactobacillus brevis), this protein is Large ribosomal subunit protein uL29.